The primary structure comprises 88 residues: Large ribosomal subunit protein bL31B (88 aa).

The protein belongs to the bacterial ribosomal protein bL31 family. Type B subfamily. In terms of assembly, part of the 50S ribosomal subunit.

This chain is Large ribosomal subunit protein bL31B, found in Leuconostoc citreum (strain KM20).